Here is a 144-residue protein sequence, read N- to C-terminus: Large ribosomal subunit protein uL15 (144 aa).

A disordered region spans residues 1 to 59; the sequence is MHLNTLAPAPGAKKSSKRVGRGMGSGLGKTGGRGHKGQKSRSGGSVKPGFEGGQMPIQR. Positions 21 to 31 are enriched in gly residues; that stretch reads RGMGSGLGKTG.

This sequence belongs to the universal ribosomal protein uL15 family. In terms of assembly, part of the 50S ribosomal subunit.

Its function is as follows. Binds to the 23S rRNA. The polypeptide is Large ribosomal subunit protein uL15 (Pseudoalteromonas atlantica (strain T6c / ATCC BAA-1087)).